Here is a 77-residue protein sequence, read N- to C-terminus: Small ribosomal subunit protein uS17 (77 aa).

The protein belongs to the universal ribosomal protein uS17 family. Part of the 30S ribosomal subunit.

Functionally, one of the primary rRNA binding proteins, it binds specifically to the 5'-end of 16S ribosomal RNA. In Rickettsia canadensis (strain McKiel), this protein is Small ribosomal subunit protein uS17.